The following is a 107-amino-acid chain: U1-lycotoxin-Ls1b (107 aa).

The signal sequence occupies residues 1–20; it reads MMKVLVVVALLVTLISYSSS. Residues 21-41 constitute a propeptide that is removed on maturation; sequence EGIDDLEADELSSLMANEQTR. Disulfide bonds link C44-C59, C51-C68, C58-C86, and C70-C84.

Belongs to the neurotoxin 19 (CSTX) family. 04 (U1-Lctx) subfamily. In terms of tissue distribution, expressed by the venom gland.

The protein resides in the secreted. This is U1-lycotoxin-Ls1b from Lycosa singoriensis (Wolf spider).